A 374-amino-acid chain; its full sequence is Probable carboxylesterase 4, mitochondrial (374 aa).

The transit peptide at 1-52 (MLRRITCSSSLASPSLFLRFFRQLPRSYSSPTTIAVSGRNIRRLSTPTTLRC) directs the protein to the mitochondrion. Positions 135–137 (HGG) match the Involved in the stabilization of the negatively charged intermediate by the formation of the oxyanion hole motif. Active-site residues include serine 219, aspartate 317, and histidine 349.

It belongs to the 'GDXG' lipolytic enzyme family. As to expression, expressed in leaves, stems, flowers and siliques.

It localises to the mitochondrion. The catalysed reaction is a carboxylic ester + H2O = an alcohol + a carboxylate + H(+). Carboxylesterase acting on esters with varying acyl chain length. This chain is Probable carboxylesterase 4, mitochondrial (CXE4), found in Arabidopsis thaliana (Mouse-ear cress).